Consider the following 1577-residue polypeptide: Pentafunctional AROM polypeptide (1577 aa).

Residues 1-392 are 3-dehydroquinate synthase; sequence MASVGLEKVN…YGTSAHVVSD (392 aa). Residues 80–83, 111–113, and Asp-116 contribute to the NAD(+) site; these read ETYK and GGV. Arg-127 contributes to the 7-phospho-2-dehydro-3-deoxy-D-arabino-heptonate binding site. 136 to 137 is an NAD(+) binding site; it reads TS. 7-phospho-2-dehydro-3-deoxy-D-arabino-heptonate contacts are provided by Asp-143 and Lys-149. Position 158 (Lys-158) interacts with NAD(+). Asn-159 lines the 7-phospho-2-dehydro-3-deoxy-D-arabino-heptonate pocket. NAD(+) is bound by residues 176–179 and Asn-187; that span reads WLET. Residue Glu-191 coordinates Zn(2+). 7-phospho-2-dehydro-3-deoxy-D-arabino-heptonate contacts are provided by residues 191-194 and Lys-258; that span reads EVIK. Glu-268 acts as the Proton acceptor; for 3-dehydroquinate synthase activity in catalysis. Residues 272 to 276 and His-279 each bind 7-phospho-2-dehydro-3-deoxy-D-arabino-heptonate; that span reads RNLLN. His-279 provides a ligand contact to Zn(2+). His-283 acts as the Proton acceptor; for 3-dehydroquinate synthase activity in catalysis. The 7-phospho-2-dehydro-3-deoxy-D-arabino-heptonate site is built by His-295 and Lys-364. His-295 is a binding site for Zn(2+). Residues 405–863 form an EPSP synthase region; that stretch reads VYPFTDVRSS…WDVLHSRLGA (459 aa). The active-site For EPSP synthase activity is Cys-845. Residues 882-1071 form a shikimate kinase region; that stretch reads VVLIGMRAAG…VPVKRSTFVC (190 aa). ATP is bound at residue 886 to 893; the sequence is GMRAAGKS. The tract at residues 1072–1284 is 3-dehydroquinase; sequence LTFQNLLPEM…AAPGQLTLRQ (213 aa). The active-site Proton acceptor; for 3-dehydroquinate dehydratase activity is the His-1189. Residue Lys-1218 is the Schiff-base intermediate with substrate; for 3-dehydroquinate dehydratase activity of the active site. The segment at 1297–1577 is shikimate dehydrogenase; sequence PKKMFVVGSP…APVYDAVTQE (281 aa).

In the N-terminal section; belongs to the sugar phosphate cyclases superfamily. Dehydroquinate synthase family. It in the 2nd section; belongs to the EPSP synthase family. This sequence in the 3rd section; belongs to the shikimate kinase family. The protein in the 4th section; belongs to the type-I 3-dehydroquinase family. In the C-terminal section; belongs to the shikimate dehydrogenase family. Homodimer. It depends on Zn(2+) as a cofactor.

It is found in the cytoplasm. It catalyses the reaction 7-phospho-2-dehydro-3-deoxy-D-arabino-heptonate = 3-dehydroquinate + phosphate. The catalysed reaction is 3-dehydroquinate = 3-dehydroshikimate + H2O. It carries out the reaction shikimate + NADP(+) = 3-dehydroshikimate + NADPH + H(+). The enzyme catalyses shikimate + ATP = 3-phosphoshikimate + ADP + H(+). It catalyses the reaction 3-phosphoshikimate + phosphoenolpyruvate = 5-O-(1-carboxyvinyl)-3-phosphoshikimate + phosphate. It functions in the pathway metabolic intermediate biosynthesis; chorismate biosynthesis; chorismate from D-erythrose 4-phosphate and phosphoenolpyruvate: step 2/7. Its pathway is metabolic intermediate biosynthesis; chorismate biosynthesis; chorismate from D-erythrose 4-phosphate and phosphoenolpyruvate: step 3/7. The protein operates within metabolic intermediate biosynthesis; chorismate biosynthesis; chorismate from D-erythrose 4-phosphate and phosphoenolpyruvate: step 4/7. It participates in metabolic intermediate biosynthesis; chorismate biosynthesis; chorismate from D-erythrose 4-phosphate and phosphoenolpyruvate: step 5/7. It functions in the pathway metabolic intermediate biosynthesis; chorismate biosynthesis; chorismate from D-erythrose 4-phosphate and phosphoenolpyruvate: step 6/7. In terms of biological role, the AROM polypeptide catalyzes 5 consecutive enzymatic reactions in prechorismate polyaromatic amino acid biosynthesis. The sequence is that of Pentafunctional AROM polypeptide from Eremothecium gossypii (strain ATCC 10895 / CBS 109.51 / FGSC 9923 / NRRL Y-1056) (Yeast).